The following is an 870-amino-acid chain: MSTQQTMTVDEHINQLVAKAQVALKEYLKPEYTQEKIDYIVKKASVAALDQHCALAAAAVEETGRGIFEDKATKNIFACEHVTHEMRHAKTVGIINVDPLYGITEIAEPVGVVCGVTPVTNPTSTAIFKSLISIKTRNPIVFSFHPSALKCSIMAAKIVRDAAISAGAPENCIQWIEFGGIEASNKLMNHPGVATILATGGNAMVKAAYSSGKPALGVGAGNVPTYIEKTCNIKQAANDVVMSKSFDNGMICASEQAAIIDKEIYDQVVEEMKTLGAYFINEEEKAKLEKFMFGVNAYSADVNNARLNPKCPGMSPQWFAEQVGIKVPEDCNIICAVCKEVGPNEPLTREKLSPVLAILKAENTQDGIDKAEAMVEFNGRGHSAAIHSNDKAVVEKYALTMKACRILHNTPSSQGGIGSIYNYIWPSFTLGCGSYGGNSVSANVTYHNLLNIKRLADRRNNLQWFRVPPKIFFEPHSIRYLAELKELSKIFIVSDRMMYKLGYVDRVMDVLKRRSNEVEIEIFIDVEPDPSIQTVQKGLAVMNTFGPDNIIAIGGGSAMDAAKIMWLLYEHPEADFFAMKQKFIDLRKRAFKFPTMGKKARLICIPTTSGTGSEVTPFAVISDHETGKKYPLADYSLTPSVAIVDPMFTMSLPKRAIADTGLDVLVHATEAYVSVMANEYTDGLAREAVKLVFENLLKSYNGDLEAREKMHNAATIAGMAFASAFLGMDHSMAHKVGAAFHLPHGRCVAVLLPHVIRYNGQKPRKLAMWPKYNFYKADQRYMELAQMVGLKCNTPAEGVEAFAKACEELMKATETITGFKQANIDEAAWMSKVPEMALLAFEDQCSPANPRVPMVKDMEKILKAAYYPIA.

Cys-252 is an active-site residue. 431-436 lines the NAD(+) pocket; that stretch reads GCGSYG.

The protein in the N-terminal section; belongs to the aldehyde dehydrogenase family. In the C-terminal section; belongs to the iron-containing alcohol dehydrogenase family. In terms of assembly, seems to form a rod shaped homomer composed of at least 20 identical subunits. The cofactor is Zn(2+). Fe(2+) serves as cofactor.

The catalysed reaction is a primary alcohol + NAD(+) = an aldehyde + NADH + H(+). It catalyses the reaction a secondary alcohol + NAD(+) = a ketone + NADH + H(+). It carries out the reaction acetaldehyde + NAD(+) + CoA = acetyl-CoA + NADH + H(+). Its function is as follows. This enzyme has two NAD(+)-dependent activities: ADH and ACDH. May be a critical enzyme in the fermentative pathway. This is Aldehyde-alcohol dehydrogenase 2 (ADH2) from Entamoeba histolytica (strain ATCC 30459 / HM-1:IMSS / ABRM).